A 330-amino-acid polypeptide reads, in one-letter code: Cathepsin K (330 aa).

The N-terminal stretch at 1-16 (MWGLEVLLLLPMASFA) is a signal peptide. Residues 17–115 (LYPEEILDTQ…TLYIPDWESR (99 aa)) constitute a propeptide, activation peptide. Asn-104 is a glycosylation site (N-linked (GlcNAc...) asparagine). 3 disulfides stabilise this stretch: Cys-137/Cys-178, Cys-171/Cys-211, and Cys-270/Cys-319. Cys-140 is an active-site residue. Residues His-277 and Asn-297 contribute to the active site.

This sequence belongs to the peptidase C1 family.

It is found in the lysosome. The protein resides in the secreted. Its subcellular location is the apical cell membrane. The enzyme catalyses Broad proteolytic activity. With small-molecule substrates and inhibitors, the major determinant of specificity is P2, which is preferably Leu, Met &gt; Phe, and not Arg.. Functionally, thiol protease involved in osteoclastic bone resorption and may participate partially in the disorder of bone remodeling. Displays potent endoprotease activity against fibrinogen at acid pH. May play an important role in extracellular matrix degradation. Involved in the release of thyroid hormone thyroxine (T4) by limited proteolysis of TG/thyroglobulin in the thyroid follicle lumen. The chain is Cathepsin K (CTSK) from Canis lupus familiaris (Dog).